A 146-amino-acid polypeptide reads, in one-letter code: VEWTDFERATIKDIFSKLEYDVVGPATLARCLVVYPWTQRYFGKFGNLYNATAIAENAMVSKHGTTILHGLDRAVKNMDDIKNTYAELSVLHSEKLHVDPDNFKLLADCLTIVVAARFGSAFTGEVQAAFEKFMAVVVSSLGRQYH.

The Globin domain maps to 2 to 146 (EWTDFERATI…VVSSLGRQYH (145 aa)). Heme b contacts are provided by H63 and H92.

The protein belongs to the globin family. In terms of assembly, hbC is a heterotetramer of two alpha chains and two beta-C chains. In terms of tissue distribution, red blood cells.

Involved in oxygen transport from gills to the various peripheral tissues. This chain is Hemoglobin subunit beta-C (hbbc), found in Trematomus bernacchii (Emerald rockcod).